The sequence spans 279 residues: MKKLLISAVSALVLGSGAAFANSNVPDHAFSFEGIFGKYDQAQLRRGFQVYNEVCSACHGMKFVPIRTLADDGGPQLDPTFVREYAAGLDTIIDKDSGEERDRKETDMFPTRVGDGMGPDLSVMAKARAGFSGPAGSGMNQLFKGMGGPEYIYNYVIGFEENPECAPEGIDGYYYNKTFQIGGVPDTCKDAAGVKITHGSWARMPPPLVDDQVTYEDGTPATVDQMAQDVSAFLMWAAEPKLVARKQMGLVAMVMLGLLSVMLYLTNKRLWAPYKGHKA.

Residues 1 to 21 form the signal peptide; the sequence is MKKLLISAVSALVLGSGAAFA. Heme c-binding residues include cysteine 55, cysteine 58, histidine 59, and methionine 204. Residues 248-266 traverse the membrane as a helical segment; that stretch reads MGLVAMVMLGLLSVMLYLT.

In terms of assembly, the main subunits of complex b-c1 are: cytochrome b, cytochrome c1 and the Rieske protein. Post-translationally, binds 1 heme c group covalently per subunit.

Its subcellular location is the cell membrane. Component of the ubiquinol-cytochrome c reductase complex (complex III or cytochrome b-c1 complex), which is a respiratory chain that generates an electrochemical potential coupled to ATP synthesis. c1 functions as an electron donor to cytochrome c. The sequence is that of Cytochrome c1 (petC) from Rhodobacter capsulatus (strain ATCC BAA-309 / NBRC 16581 / SB1003).